Consider the following 65-residue polypeptide: Cytochrome b-c1 complex subunit 9, mitochondrial (65 aa).

A helical transmembrane segment spans residues 14–34 (IYVATIFGGAFAFQGFFDVAV).

This sequence belongs to the UQCR10/QCR9 family. Component of the ubiquinol-cytochrome c oxidoreductase (cytochrome b-c1 complex, complex III, CIII), a multisubunit enzyme composed of 10 subunits. The complex is composed of 3 respiratory subunits cytochrome b (COB), cytochrome c1 (CYT1) and Rieske protein (RIP1), 2 core protein subunits COR1 and QCR2, and 5 low-molecular weight protein subunits QCR6, QCR7, QCR8, QCR9 and QCR10. The complex exists as an obligatory dimer and forms supercomplexes (SCs) in the inner mitochondrial membrane with a monomer or a dimer of cytochrome c oxidase (complex IV, CIV), resulting in 2 different assemblies (supercomplexes III(2)IV and III(2)IV(2)).

Its subcellular location is the membrane. The protein resides in the mitochondrion inner membrane. In terms of biological role, component of the ubiquinol-cytochrome c oxidoreductase, a multisubunit transmembrane complex that is part of the mitochondrial electron transport chain which drives oxidative phosphorylation. The complex plays an important role in the uptake of multiple carbon sources present in different host niches. The sequence is that of Cytochrome b-c1 complex subunit 9, mitochondrial from Candida albicans (strain SC5314 / ATCC MYA-2876) (Yeast).